Reading from the N-terminus, the 210-residue chain is Uridine kinase (210 aa).

Position 14 to 21 (14 to 21 (GGSGSGKT)) interacts with ATP.

Belongs to the uridine kinase family.

It is found in the cytoplasm. The catalysed reaction is uridine + ATP = UMP + ADP + H(+). The enzyme catalyses cytidine + ATP = CMP + ADP + H(+). Its pathway is pyrimidine metabolism; CTP biosynthesis via salvage pathway; CTP from cytidine: step 1/3. The protein operates within pyrimidine metabolism; UMP biosynthesis via salvage pathway; UMP from uridine: step 1/1. The chain is Uridine kinase from Deinococcus radiodurans (strain ATCC 13939 / DSM 20539 / JCM 16871 / CCUG 27074 / LMG 4051 / NBRC 15346 / NCIMB 9279 / VKM B-1422 / R1).